Here is a 559-residue protein sequence, read N- to C-terminus: Phenylalanine--tRNA ligase beta subunit (559 aa).

The region spanning 274–350 (FEPKIIDVHT…LGYGFNELPA (77 aa)) is the B5 domain. Mg(2+) contacts are provided by D328, D334, E337, and N338.

Belongs to the phenylalanyl-tRNA synthetase beta subunit family. Type 2 subfamily. Tetramer of two alpha and two beta subunits. The cofactor is Mg(2+).

It is found in the cytoplasm. It catalyses the reaction tRNA(Phe) + L-phenylalanine + ATP = L-phenylalanyl-tRNA(Phe) + AMP + diphosphate + H(+). This chain is Phenylalanine--tRNA ligase beta subunit, found in Methanosphaera stadtmanae (strain ATCC 43021 / DSM 3091 / JCM 11832 / MCB-3).